The sequence spans 414 residues: Patatin-like protein 1 (414 aa).

Residues 22–228 form the PNPLA domain; that stretch reads LSLDGGGVRG…TANNPTLVAM (207 aa). The short motif at 26–31 is the GXGXXG element; the sequence is GGGVRG. The GXSXG motif lies at 64 to 68; that stretch reads GTSTG. The Nucleophile role is filled by Ser-66. Asp-215 functions as the Proton acceptor in the catalytic mechanism. The short motif at 215–217 is the DGA/G element; that stretch reads DGA. Ser-399 bears the Phosphoserine mark.

This sequence belongs to the patatin family. Phosphorylated at Ser-399 by CPK3. Phosphorylation enhances PLP1 activity towards phosphatidylcholine. Expressed specifically in roots and root hairs.

It is found in the cytoplasm. Functionally, possesses non-specific lipolytic acyl hydrolase (LAH) activity. Catalyzes the hydrolysis of the neutral lipids monogalactosyldiacylglycerol (MGDG), digalactosyldiacylglycerol (DGDG) and phosphatidylglycerol (PG), and less efficiently the polar lipids phosphatidylcholine (PC) and phosphatidylinositol (PI), but not the storage lipid triacylglycerol (TAG). May play a role in root development. This is Patatin-like protein 1 (PLP1) from Arabidopsis thaliana (Mouse-ear cress).